A 314-amino-acid chain; its full sequence is PDZ domain-containing protein GIPC2 (314 aa).

Basic residues predominate over residues 1 to 12; sequence MPLGLRGKKKAA. Residues 1–36 are disordered; it reads MPLGLRGKKKAAKSKEAARLVEGERSSGSQGVPGPP. Residues 13 to 25 are compositionally biased toward basic and acidic residues; sequence KSKEAARLVEGER. In terms of domain architecture, PDZ spans 117–197; the sequence is EVNVYKSEDS…EELFTLQLIE (81 aa).

Belongs to the GIPC family. In terms of assembly, probably interacts with SEMA5A. As to expression, expressed in kidney and lung (at protein level).

The protein localises to the cytoplasm. In Mus musculus (Mouse), this protein is PDZ domain-containing protein GIPC2 (Gipc2).